The following is a 188-amino-acid chain: MDCRKMARFSYSVIWIMAISKVFELGLVAGLGHQEFARPSRGYLAFRDDSIWPQEEPAIRPRSSQRVPPMGIQHSKELNRTCCLNGGTCMLGSFCACPPSFYGRNCEHDVRKENCGSVPHDTWLPKKCSLCKCWHGQLRCFPQAFLPGCDGLVMDEHLVASRTPELPPSARTTTFMLVGICLSIQSYY.

A signal peptide spans 1 to 30; that stretch reads MDCRKMARFSYSVIWIMAISKVFELGLVAG. In terms of domain architecture, EGF-like spans 78 to 107; sequence LNRTCCLNGGTCMLGSFCACPPSFYGRNCE. Residue N79 is glycosylated (N-linked (GlcNAc...) asparagine). Intrachain disulfides connect C82–C89, C83–C95, C97–C106, C115–C133, C128–C149, and C131–C140. The GPI-anchor amidated aspartate moiety is linked to residue D150. The propeptide at 151–188 is removed in mature form; the sequence is GLVMDEHLVASRTPELPPSARTTTFMLVGICLSIQSYY.

This sequence belongs to the EGF-CFC (Cripto-1/FRL1/Cryptic) family. In terms of assembly, interacts with the activin type-1 receptor ACVR1B. In terms of processing, the GPI-anchor is attached to the protein in the endoplasmic reticulum and serves to target the protein to the cell surface. There, it is processed by GPI processing phospholipase A2 (TMEM8A), removing an acyl-chain at the sn-2 position of GPI and releasing CRIPTO as a lysophosphatidylinositol-bearing form, which is further cleaved by phospholipase D (GPLD1) into a soluble form. Preferentially expressed in gastric and colorectal carcinomas than in their normal counterparts. Expressed in breast and lung.

The protein resides in the cell membrane. It localises to the secreted. GPI-anchored cell membrane protein involved in Nodal signaling. Cell-associated CRIPTO acts as a Nodal coreceptor in cis. Shedding of CRIPTO by TMEM8A modulates Nodal signaling by allowing soluble CRIPTO to act as a Nodal coreceptor on other cells. Could play a role in the determination of the epiblastic cells that subsequently give rise to the mesoderm. This is Protein Cripto from Homo sapiens (Human).